The primary structure comprises 360 residues: DNA replication and repair protein RecF (360 aa).

30 to 37 (GQNGSGKT) is an ATP binding site.

This sequence belongs to the RecF family.

It is found in the cytoplasm. In terms of biological role, the RecF protein is involved in DNA metabolism; it is required for DNA replication and normal SOS inducibility. RecF binds preferentially to single-stranded, linear DNA. It also seems to bind ATP. This Shewanella frigidimarina (strain NCIMB 400) protein is DNA replication and repair protein RecF.